Here is a 591-residue protein sequence, read N- to C-terminus: Aspartate--tRNA(Asp/Asn) ligase (591 aa).

Residue E174 participates in L-aspartate binding. An aspartate region spans residues 198–201 (QLFK). R220 lines the L-aspartate pocket. ATP contacts are provided by residues 220–222 (RDE) and Q229. H450 contributes to the L-aspartate binding site. Residue E483 participates in ATP binding. An L-aspartate-binding site is contributed by R490. 535 to 538 (GLDR) is a binding site for ATP.

It belongs to the class-II aminoacyl-tRNA synthetase family. Type 1 subfamily. In terms of assembly, homodimer.

The protein resides in the cytoplasm. It carries out the reaction tRNA(Asx) + L-aspartate + ATP = L-aspartyl-tRNA(Asx) + AMP + diphosphate. Aspartyl-tRNA synthetase with relaxed tRNA specificity since it is able to aspartylate not only its cognate tRNA(Asp) but also tRNA(Asn). Reaction proceeds in two steps: L-aspartate is first activated by ATP to form Asp-AMP and then transferred to the acceptor end of tRNA(Asp/Asn). The sequence is that of Aspartate--tRNA(Asp/Asn) ligase from Pseudomonas aeruginosa (strain LESB58).